Reading from the N-terminus, the 223-residue chain is Large ribosomal subunit protein uL6c (223 aa).

The N-terminal 41 residues, 1 to 41 (MASSLVSSFQPRSAFLGDRNVFKVSSTPFAQVGYSSKTIEC), are a transit peptide targeting the chloroplast.

Belongs to the universal ribosomal protein uL6 family. Part of the 50S ribosomal subunit.

It is found in the plastid. Its subcellular location is the chloroplast. In terms of biological role, this protein binds directly to 23S ribosomal RNA and is located at the aminoacyl-tRNA binding site of the peptidyltransferase center. The sequence is that of Large ribosomal subunit protein uL6c (RPL6) from Arabidopsis thaliana (Mouse-ear cress).